The sequence spans 348 residues: ECA polysaccharide chain length modulation protein (348 aa).

Topologically, residues 1-30 are cytoplasmic; that stretch reads MTQPMPGKPAEDAENELDIRGLFRTLWAGK. Residues 31 to 51 form a helical membrane-spanning segment; it reads LWIIGMGLAFALIALAYTFFA. The Periplasmic segment spans residues 52–322; that stretch reads RQEWSSTAIT…EPVKRDSPRR (271 aa). Residues 323 to 343 traverse the membrane as a helical segment; that stretch reads AFLMIMWGIVGGLIGAGVALT. Topologically, residues 344–348 are cytoplasmic; it reads RRCSK.

This sequence belongs to the WzzB/Cld/Rol family. Homooctamer. Probably part of a complex composed of WzxE, WzyE and WzzE.

Its subcellular location is the cell inner membrane. It participates in bacterial outer membrane biogenesis; enterobacterial common antigen biosynthesis. Its function is as follows. Modulates the polysaccharide chain length of enterobacterial common antigen (ECA). The polypeptide is ECA polysaccharide chain length modulation protein (Escherichia coli O157:H7).